A 334-amino-acid chain; its full sequence is Glutaminase (334 aa).

Residues Ser-76, Asn-126, Glu-170, Asn-177, Tyr-201, Tyr-253, and Val-271 each coordinate substrate.

Belongs to the glutaminase family. Homotetramer.

It carries out the reaction L-glutamine + H2O = L-glutamate + NH4(+). In Nostoc sp. (strain PCC 7120 / SAG 25.82 / UTEX 2576), this protein is Glutaminase.